The following is a 425-amino-acid chain: Paired box pox-neuro protein (425 aa).

The paired DNA-binding region spans 5–132; it reads GQAGVNQLGG…SSINRILRNS (128 aa). Positions 8–64 are PAI subdomain; the sequence is GVNQLGGVFVNGRPLPDCVRRRIVDLALCGVRPCDISRQLLVSHGCVSKILTRFYET. Positions 84-132 are RED subdomain; it reads TVVKKIIRLKEENSGMFAWEIREQLQQQRVCDPSSVPSISSINRILRNS. Disordered regions lie at residues 159-188, 297-358, and 383-425; these read QAGSGPSNGYGGQAPPPPVTVAPPTPAATP, TKSE…RKRN, and LESS…EVVN. The span at 172 to 185 shows a compositional bias: pro residues; it reads APPPPVTVAPPTPA. 2 stretches are compositionally biased toward low complexity: residues 323-332 and 340-349; these read SSPAALSLTA and GSAPEASPGS. A compositionally biased stretch (acidic residues) spans 402 to 425; sequence TPEDEDPAEAEEEQEEEDSVEVVN.

Central and peripheral nervous systems.

It is found in the nucleus. Its function is as follows. Transcriptional regulator that specifies poly-innervated organs (chemosensory bristle). Also controls the number of neurons. The sequence is that of Paired box pox-neuro protein (Poxn) from Drosophila melanogaster (Fruit fly).